A 157-amino-acid polypeptide reads, in one-letter code: Crossover junction endodeoxyribonuclease RuvC (157 aa).

Active-site residues include Asp-7, Glu-67, and Asp-140. Mg(2+) contacts are provided by Asp-7, Glu-67, and Asp-140.

The protein belongs to the RuvC family. In terms of assembly, homodimer which binds Holliday junction (HJ) DNA. The HJ becomes 2-fold symmetrical on binding to RuvC with unstacked arms; it has a different conformation from HJ DNA in complex with RuvA. In the full resolvosome a probable DNA-RuvA(4)-RuvB(12)-RuvC(2) complex forms which resolves the HJ. Mg(2+) is required as a cofactor.

It is found in the cytoplasm. It catalyses the reaction Endonucleolytic cleavage at a junction such as a reciprocal single-stranded crossover between two homologous DNA duplexes (Holliday junction).. Functionally, the RuvA-RuvB-RuvC complex processes Holliday junction (HJ) DNA during genetic recombination and DNA repair. Endonuclease that resolves HJ intermediates. Cleaves cruciform DNA by making single-stranded nicks across the HJ at symmetrical positions within the homologous arms, yielding a 5'-phosphate and a 3'-hydroxyl group; requires a central core of homology in the junction. The consensus cleavage sequence is 5'-(A/T)TT(C/G)-3'. Cleavage occurs on the 3'-side of the TT dinucleotide at the point of strand exchange. HJ branch migration catalyzed by RuvA-RuvB allows RuvC to scan DNA until it finds its consensus sequence, where it cleaves and resolves the cruciform DNA. The polypeptide is Crossover junction endodeoxyribonuclease RuvC (Rickettsia prowazekii (strain Madrid E)).